The sequence spans 427 residues: Trigger factor (427 aa).

Residues glycine 163–proline 248 form the PPIase FKBP-type domain.

Belongs to the FKBP-type PPIase family. Tig subfamily.

It is found in the cytoplasm. The enzyme catalyses [protein]-peptidylproline (omega=180) = [protein]-peptidylproline (omega=0). Its function is as follows. Involved in protein export. Acts as a chaperone by maintaining the newly synthesized protein in an open conformation. Functions as a peptidyl-prolyl cis-trans isomerase. The polypeptide is Trigger factor (Streptococcus suis (strain 98HAH33)).